The primary structure comprises 509 residues: Envelop protein OPG153 (509 aa).

Cysteine 43 and cysteine 342 are oxidised to a cystine. Residues 356 to 421 (GHYQDSKINI…KLLPVEEPDP (66 aa)) are disordered. Residues 366-385 (EDDDIIDDDDDDDDDDDDDD) show a composition bias toward acidic residues. Pro residues predominate over residues 389–401 (KPTPIPDPHPRPP).

The protein belongs to the orthopoxvirus OPG153 protein family. Interacts with proteins OPG094 and OPG143. Interacts with OPG154. Interacts with OPG152. Interacts with host laminin.

The protein localises to the virion membrane. Functionally, envelop protein that mediates acid-dependent endocytosis into host cells. Plays an important role in endocytic entry of the virus by acting as an acid-sensitive membrane fusion suppressor. Low pH in host endosomes triggers conformational changes to allow de-repression of viral fusion complex activity and membrane fusion within vesicles. Also plays a role in bridging the mature virion with structural protein OPG152. The chain is Envelop protein OPG153 (OPG153) from Monkeypox virus.